The primary structure comprises 64 residues: Alpha-conotoxin CnIA (64 aa).

An N-terminal signal peptide occupies residues 1-21; it reads MGMRMMFTVFLLVVLTTTVVS. Positions 22–47 are excised as a propeptide; it reads FPSDSASDGRDDEAKDERSDIYESKR. 2 disulfides stabilise this stretch: Cys51–Cys56 and Cys52–Cys62. Pro54 carries the post-translational modification 4-hydroxyproline; in CnIK; partial. Position 62 is a cysteine amide (Cys62).

The protein belongs to the conotoxin A superfamily. As to expression, expressed by the venom duct.

It is found in the secreted. Its function is as follows. Alpha-conotoxins act on postsynaptic membranes, they bind to the nicotinic acetylcholine receptors (nAChR) and thus inhibit them. CnIA and CnIB block muscular nAChR alpha-1/gamma and alpha-1/delta subunits. This Conus consors (Singed cone) protein is Alpha-conotoxin CnIA.